The sequence spans 185 residues: Large ribosomal subunit protein uL5 (185 aa).

The protein belongs to the universal ribosomal protein uL5 family. In terms of assembly, part of the 50S ribosomal subunit; part of the 5S rRNA/L5/L18/L25 subcomplex. Contacts the 5S rRNA and the P site tRNA. Forms a bridge to the 30S subunit in the 70S ribosome.

This is one of the proteins that bind and probably mediate the attachment of the 5S RNA into the large ribosomal subunit, where it forms part of the central protuberance. In the 70S ribosome it contacts protein S13 of the 30S subunit (bridge B1b), connecting the 2 subunits; this bridge is implicated in subunit movement. Contacts the P site tRNA; the 5S rRNA and some of its associated proteins might help stabilize positioning of ribosome-bound tRNAs. This is Large ribosomal subunit protein uL5 from Rhodopseudomonas palustris (strain BisA53).